Here is a 135-residue protein sequence, read N- to C-terminus: Ribonuclease VapC35 (135 aa).

The 122-residue stretch at 2–123 folds into the PINc domain; sequence IYLETSALVK…DNRLKEAAEA (122 aa). The Mg(2+) site is built by glutamate 5 and aspartate 91.

The protein belongs to the PINc/VapC protein family. Requires Mg(2+) as cofactor.

Toxic component of a type II toxin-antitoxin (TA) system. An RNase. Its toxic effect is neutralized by coexpression with cognate antitoxin VapB35. This Mycobacterium tuberculosis (strain CDC 1551 / Oshkosh) protein is Ribonuclease VapC35.